The chain runs to 219 residues: Probable GTP-binding protein EngB (219 aa).

The EngB-type G domain occupies glycine 33–histidine 217. GTP-binding positions include glycine 41 to serine 48, glycine 68 to glutamate 72, aspartate 95 to glycine 98, threonine 162 to aspartate 165, and threonine 196 to serine 198. Residues serine 48 and threonine 70 each coordinate Mg(2+).

Belongs to the TRAFAC class TrmE-Era-EngA-EngB-Septin-like GTPase superfamily. EngB GTPase family. Mg(2+) serves as cofactor.

Necessary for normal cell division and for the maintenance of normal septation. The protein is Probable GTP-binding protein EngB of Allorhizobium ampelinum (strain ATCC BAA-846 / DSM 112012 / S4) (Agrobacterium vitis (strain S4)).